Consider the following 445-residue polypeptide: Exodeoxyribonuclease 7 large subunit (445 aa).

It belongs to the XseA family. As to quaternary structure, heterooligomer composed of large and small subunits.

It localises to the cytoplasm. The enzyme catalyses Exonucleolytic cleavage in either 5'- to 3'- or 3'- to 5'-direction to yield nucleoside 5'-phosphates.. Its function is as follows. Bidirectionally degrades single-stranded DNA into large acid-insoluble oligonucleotides, which are then degraded further into small acid-soluble oligonucleotides. This Xanthomonas axonopodis pv. citri (strain 306) protein is Exodeoxyribonuclease 7 large subunit.